A 504-amino-acid chain; its full sequence is ATP synthase subunit alpha, chloroplastic (504 aa).

An ATP-binding site is contributed by glycine 170–threonine 177.

The protein belongs to the ATPase alpha/beta chains family. F-type ATPases have 2 components, CF(1) - the catalytic core - and CF(0) - the membrane proton channel. CF(1) has five subunits: alpha(3), beta(3), gamma(1), delta(1), epsilon(1). CF(0) has four main subunits: a, b, b' and c.

Its subcellular location is the plastid. The protein localises to the chloroplast thylakoid membrane. The enzyme catalyses ATP + H2O + 4 H(+)(in) = ADP + phosphate + 5 H(+)(out). In terms of biological role, produces ATP from ADP in the presence of a proton gradient across the membrane. The alpha chain is a regulatory subunit. This Porphyra purpurea (Red seaweed) protein is ATP synthase subunit alpha, chloroplastic.